The primary structure comprises 198 residues: GTP cyclohydrolase 1 (198 aa).

Positions 87, 90, and 158 each coordinate Zn(2+).

This sequence belongs to the GTP cyclohydrolase I family. As to quaternary structure, homomer.

The enzyme catalyses GTP + H2O = 7,8-dihydroneopterin 3'-triphosphate + formate + H(+). Its pathway is cofactor biosynthesis; 7,8-dihydroneopterin triphosphate biosynthesis; 7,8-dihydroneopterin triphosphate from GTP: step 1/1. In Janthinobacterium sp. (strain Marseille) (Minibacterium massiliensis), this protein is GTP cyclohydrolase 1.